Consider the following 822-residue polypeptide: Microcephalin (822 aa).

A BRCT 1 domain is found at 10 to 99 (AFLKDVVAYV…ALVDESLFPA (90 aa)). 3 disordered regions span residues 182–203 (MKEKRENLSPTSSQMLEQSQQN), 219–243 (PLSSDESFASGSHSSFGDSCGDQER), and 266–295 (SSFYGSASPNHLRQPRPQKAPDSPSKESIN). Polar residues-rich tracts occupy residues 189–203 (LSPTSSQMLEQSQQN) and 219–235 (PLSSDESFASGSHSSFG). 3 positions are modified to phosphoserine: S273, S290, and S327. The residue at position 329 (T329) is a Phosphothreonine. 3 disordered regions span residues 335 to 366 (EHQVRLGPKNSSAKRKRAADLGSSPKGKLKKR), 498 to 567 (NDSP…SPED), and 594 to 636 (TGYS…PTRT). Residues 522–541 (HPDTLSSSAHHITPLKGNST) show a composition bias toward polar residues. Composition is skewed to basic and acidic residues over residues 542–553 (ETRDPGDGKGSP) and 625–634 (KKSEKEEKPT). 2 consecutive BRCT domains span residues 627–717 (SEKE…PFEL) and 738–820 (YQGT…NYQL).

As to quaternary structure, interacts with CDC27 and maybe other components of the APC/C complex. Interacts with histone variant H2AX under DNA damage conditions. In terms of tissue distribution, high levels of expression are found in the developing forebrain and, in particular, in the walls of the lateral ventricles.

The protein resides in the cytoplasm. Its subcellular location is the cytoskeleton. It is found in the microtubule organizing center. It localises to the centrosome. In terms of biological role, implicated in chromosome condensation and DNA damage induced cellular responses. May play a role in neurogenesis and regulation of the size of the cerebral cortex. This is Microcephalin from Mus musculus (Mouse).